We begin with the raw amino-acid sequence, 519 residues long: MAAEAADLGLGAAVPVELRRERRMVCVEYPGVVRDVAKMLPTLGGEEGVSRIYADPTKRLELYFRPKDPYCHPVCANRFSTSSLLLRIRKRTRRQKGVLGTEAHSEVTFDMEILGIISTIYKFQGMSDFQYLAVHTEAGGKHTSMYDKVLMLRPEKEAFFHQELPLYIPPPIFSRLDAPVDYFYRPETQHREGYNNPPISGENLIGLSRARRPHNAIFVNFEDEEVPKQPLEAAAQTWRRVCTNPVDRKVEEELRKLFDIRPIWSRNAVKANISVHPDKLKVLLPFIAYYMITGPWRSLWIRFGYDPRKNPDAKIYQVLDFRIRCGMKHGYAPSDLPVKAKRSTYNYSLPITVKKTSSQLVTMHDLKQGLGPSGTSGARKPASSKYKLKDSVYIFREGALPPYRQMFYQLCDLNVEELQKIIHRNDGAENSCTERDGWCLPKTSDELRDTMSLMIRQTIRSKRPALFSSSAKADGGKEQLTYESGEDEEDEEEEEEEEEDFKPSDGSENEMETEILDYV.

The residue at position 2 (Ala2) is an N-acetylalanine. The interval 465–519 (ALFSSSAKADGGKEQLTYESGEDEEDEEEEEEEEEDFKPSDGSENEMETEILDYV) is disordered. Acidic residues-rich tracts occupy residues 484-500 (SGEDEEDEEEEEEEEED) and 507-519 (SENEMETEILDYV).

It belongs to the TFIIIC subunit 5 family. In terms of assembly, part of the TFIIIC subcomplex TFIIIC2, consisting of six subunits, GTF3C1, GTF3C2, GTF3C3, GTF3C4, GTF3C5 and GTF3C6. Interacts with BRF1, GTF3C6 and TBP.

Its subcellular location is the nucleus. Its function is as follows. Involved in RNA polymerase III-mediated transcription. Integral, tightly associated component of the DNA-binding TFIIIC2 subcomplex that directly binds tRNA and virus-associated RNA promoters. This is General transcription factor 3C polypeptide 5 (GTF3C5) from Homo sapiens (Human).